Consider the following 127-residue polypeptide: V-type proton ATPase subunit F (127 aa).

Belongs to the V-ATPase F subunit family. V-ATPase is a heteromultimeric enzyme made up of two complexes: the ATP-hydrolytic V1 complex and the proton translocation V0 complex. The V1 complex consists of three catalytic AB heterodimers that form a heterohexamer, three peripheral stalks each consisting of EG heterodimers, one central rotor including subunits D and F, and the regulatory subunits C and H. The proton translocation complex V0 consists of the proton transport subunit a, a ring of proteolipid subunits c9c'', rotary subunit d, subunits e and f, and the accessory subunits VhaAC45 and ATP6AP2.

Its function is as follows. Subunit of the V1 complex of vacuolar(H+)-ATPase (V-ATPase), a multisubunit enzyme composed of a peripheral complex (V1) that hydrolyzes ATP and a membrane integral complex (V0) that translocates protons. V-ATPase is responsible for acidifying and maintaining the pH of intracellular compartments and in some cell types, is targeted to the plasma membrane, where it is responsible for acidifying the extracellular environment. This Anopheles gambiae (African malaria mosquito) protein is V-type proton ATPase subunit F (Vha14).